The following is a 515-amino-acid chain: Probable cytochrome P450 4p3 (515 aa).

Residues Glu-322 and Cys-461 each coordinate heme.

Belongs to the cytochrome P450 family. The cofactor is heme.

It localises to the endoplasmic reticulum membrane. The protein localises to the microsome membrane. In terms of biological role, may be involved in the metabolism of insect hormones and in the breakdown of synthetic insecticides. The protein is Probable cytochrome P450 4p3 (Cyp4p3) of Drosophila melanogaster (Fruit fly).